Here is a 575-residue protein sequence, read N- to C-terminus: Isocitrate dehydrogenase kinase/phosphatase (575 aa).

ATP contacts are provided by residues 315–321 and K336; that span reads APGIRGM. Residue D371 is part of the active site.

This sequence belongs to the AceK family.

It is found in the cytoplasm. It catalyses the reaction L-seryl-[isocitrate dehydrogenase] + ATP = O-phospho-L-seryl-[isocitrate dehydrogenase] + ADP + H(+). Functionally, bifunctional enzyme which can phosphorylate or dephosphorylate isocitrate dehydrogenase (IDH) on a specific serine residue. This is a regulatory mechanism which enables bacteria to bypass the Krebs cycle via the glyoxylate shunt in response to the source of carbon. When bacteria are grown on glucose, IDH is fully active and unphosphorylated, but when grown on acetate or ethanol, the activity of IDH declines drastically concomitant with its phosphorylation. The sequence is that of Isocitrate dehydrogenase kinase/phosphatase from Citrobacter koseri (strain ATCC BAA-895 / CDC 4225-83 / SGSC4696).